We begin with the raw amino-acid sequence, 505 residues long: Ribosomal RNA small subunit methyltransferase F (505 aa).

Residues 123 to 129 (ASAPGSK), Glu147, Asp174, and Asp192 each bind S-adenosyl-L-methionine. Residue Cys245 is the Nucleophile of the active site. The segment at 409 to 437 (GTNANNNSNTNPNNNANTNPNNNSNTNPR) is disordered. A compositionally biased stretch (low complexity) spans 410–435 (TNANNNSNTNPNNNANTNPNNNSNTN).

The protein belongs to the class I-like SAM-binding methyltransferase superfamily. RsmB/NOP family.

It localises to the cytoplasm. It carries out the reaction cytidine(1407) in 16S rRNA + S-adenosyl-L-methionine = 5-methylcytidine(1407) in 16S rRNA + S-adenosyl-L-homocysteine + H(+). Specifically methylates the cytosine at position 1407 (m5C1407) of 16S rRNA. This Shewanella denitrificans (strain OS217 / ATCC BAA-1090 / DSM 15013) protein is Ribosomal RNA small subunit methyltransferase F.